The chain runs to 273 residues: ATP synthase subunit delta (273 aa).

The segment at 55–78 is disordered; sequence TDPAQSARPRPSSPSVSSAPRSAA. Low complexity predominate over residues 57–78; that stretch reads PAQSARPRPSSPSVSSAPRSAA.

This sequence belongs to the ATPase delta chain family. In terms of assembly, F-type ATPases have 2 components, F(1) - the catalytic core - and F(0) - the membrane proton channel. F(1) has five subunits: alpha(3), beta(3), gamma(1), delta(1), epsilon(1). F(0) has three main subunits: a(1), b(2) and c(10-14). The alpha and beta chains form an alternating ring which encloses part of the gamma chain. F(1) is attached to F(0) by a central stalk formed by the gamma and epsilon chains, while a peripheral stalk is formed by the delta and b chains.

The protein resides in the cell membrane. Functionally, f(1)F(0) ATP synthase produces ATP from ADP in the presence of a proton or sodium gradient. F-type ATPases consist of two structural domains, F(1) containing the extramembraneous catalytic core and F(0) containing the membrane proton channel, linked together by a central stalk and a peripheral stalk. During catalysis, ATP synthesis in the catalytic domain of F(1) is coupled via a rotary mechanism of the central stalk subunits to proton translocation. This protein is part of the stalk that links CF(0) to CF(1). It either transmits conformational changes from CF(0) to CF(1) or is implicated in proton conduction. The polypeptide is ATP synthase subunit delta (Streptomyces lividans).